Consider the following 440-residue polypeptide: Trigger factor (440 aa).

The PPIase FKBP-type domain occupies 163–248 (NDTVSINFKG…INSIKEKVLP (86 aa)).

It belongs to the FKBP-type PPIase family. Tig subfamily.

The protein resides in the cytoplasm. It catalyses the reaction [protein]-peptidylproline (omega=180) = [protein]-peptidylproline (omega=0). In terms of biological role, involved in protein export. Acts as a chaperone by maintaining the newly synthesized protein in an open conformation. Functions as a peptidyl-prolyl cis-trans isomerase. The sequence is that of Trigger factor from Finegoldia magna (strain ATCC 29328 / DSM 20472 / WAL 2508) (Peptostreptococcus magnus).